The primary structure comprises 134 residues: Profilin-3 (134 aa).

C13 and C118 are joined by a disulfide. Positions 84–100 (AVIRGKKGSGGITIKKT) match the Involved in PIP2 interaction motif. Residue T114 is modified to Phosphothreonine.

This sequence belongs to the profilin family. As to quaternary structure, occurs in many kinds of cells as a complex with monomeric actin in a 1:1 ratio. Phosphorylated by MAP kinases.

It localises to the cytoplasm. It is found in the cytoskeleton. Binds to actin and affects the structure of the cytoskeleton. At high concentrations, profilin prevents the polymerization of actin, whereas it enhances it at low concentrations. The protein is Profilin-3 of Olea europaea (Common olive).